The sequence spans 580 residues: Dihydroxy-acid dehydratase (580 aa).

The disordered stretch occupies residues 1–31 (MPSGSSESPADALRASDSTPDIKPRSRDVTD). Basic and acidic residues predominate over residues 20 to 31 (PDIKPRSRDVTD). Cys69 lines the [2Fe-2S] cluster pocket. Asp101 is a binding site for Mg(2+). Cys142 serves as a coordination point for [2Fe-2S] cluster. The Mg(2+) site is built by Asp143 and Lys144. At Lys144 the chain carries N6-carboxylysine. Cys219 is a binding site for [2Fe-2S] cluster. Mg(2+) is bound at residue Glu470. Catalysis depends on Ser496, which acts as the Proton acceptor.

Belongs to the IlvD/Edd family. As to quaternary structure, homodimer. It depends on [2Fe-2S] cluster as a cofactor. The cofactor is Mg(2+).

The catalysed reaction is (2R)-2,3-dihydroxy-3-methylbutanoate = 3-methyl-2-oxobutanoate + H2O. It carries out the reaction (2R,3R)-2,3-dihydroxy-3-methylpentanoate = (S)-3-methyl-2-oxopentanoate + H2O. It functions in the pathway amino-acid biosynthesis; L-isoleucine biosynthesis; L-isoleucine from 2-oxobutanoate: step 3/4. The protein operates within amino-acid biosynthesis; L-valine biosynthesis; L-valine from pyruvate: step 3/4. Functions in the biosynthesis of branched-chain amino acids. Catalyzes the dehydration of (2R,3R)-2,3-dihydroxy-3-methylpentanoate (2,3-dihydroxy-3-methylvalerate) into 2-oxo-3-methylpentanoate (2-oxo-3-methylvalerate) and of (2R)-2,3-dihydroxy-3-methylbutanoate (2,3-dihydroxyisovalerate) into 2-oxo-3-methylbutanoate (2-oxoisovalerate), the penultimate precursor to L-isoleucine and L-valine, respectively. The sequence is that of Dihydroxy-acid dehydratase from Mycobacterium sp. (strain JLS).